Reading from the N-terminus, the 113-residue chain is Molt-inhibiting hormone (113 aa).

An N-terminal signal peptide occupies residues 1–35 (MMSLAHSKFSCQRTRLLAVVLLAALWSSSLQQAAA). 3 cysteine pairs are disulfide-bonded: C42-C79, C59-C75, and C62-C88.

It belongs to the arthropod CHH/MIH/GIH/VIH hormone family.

It is found in the secreted. Functionally, inhibits Y-organs where molting hormone (ecdysteroid) is secreted. A molting cycle is initiated when MIH secretion diminishes or stops. The sequence is that of Molt-inhibiting hormone from Callinectes sapidus (Blue crab).